An 853-amino-acid polypeptide reads, in one-letter code: Leucine--tRNA ligase (853 aa).

The short motif at 40 to 50 (PYPSGKMHMGH) is the 'HIGH' region element. The short motif at 609 to 613 (KMSKS) is the 'KMSKS' region element. K612 contacts ATP.

The protein belongs to the class-I aminoacyl-tRNA synthetase family.

It is found in the cytoplasm. The catalysed reaction is tRNA(Leu) + L-leucine + ATP = L-leucyl-tRNA(Leu) + AMP + diphosphate. This is Leucine--tRNA ligase from Brachyspira hyodysenteriae (strain ATCC 49526 / WA1).